The chain runs to 60 residues: Large ribosomal subunit protein uL30 (60 aa).

This sequence belongs to the universal ribosomal protein uL30 family. Part of the 50S ribosomal subunit.

In Paraburkholderia phytofirmans (strain DSM 17436 / LMG 22146 / PsJN) (Burkholderia phytofirmans), this protein is Large ribosomal subunit protein uL30.